The primary structure comprises 327 residues: MAISILGAGAWGTAIAISLGSKKDVILWTRNETTFESINGKRESDKLPGCRISDNVSVKLAIEDTINASVTILAVPTQSLRKVCQQLHNCNLKKDVAIILACKGIEKSTLKLPSEIVNEILPNNPIAIFSGPSFAVEVARKLPYSMVLACQNNTLGSKLVSELQQENVKLEFSNDIIGVQICAALKNVFAIACGIVLGSKLGFNAHAALITKSMSEIKALYSAKIGDGSVDINTLLGPACLGDLIMTCTSLNSRNLSFGFKIGNSDNGFNVQQILSEGKSVIEGFSTAESIFNLAGKLKIKMPICEAVYRLLYESASIEDTISVLIS.

NADPH is bound by residues Trp-11, Arg-30, and Lys-103. Sn-glycerol 3-phosphate-binding residues include Lys-103, Gly-131, and Ser-133. Position 135 (Ala-135) interacts with NADPH. Sn-glycerol 3-phosphate contacts are provided by Lys-186, Asp-243, Ser-253, Arg-254, and Asn-255. Residue Lys-186 is the Proton acceptor of the active site. An NADPH-binding site is contributed by Arg-254. NADPH contacts are provided by Val-281 and Glu-283.

It belongs to the NAD-dependent glycerol-3-phosphate dehydrogenase family.

It is found in the cytoplasm. The catalysed reaction is sn-glycerol 3-phosphate + NAD(+) = dihydroxyacetone phosphate + NADH + H(+). It carries out the reaction sn-glycerol 3-phosphate + NADP(+) = dihydroxyacetone phosphate + NADPH + H(+). Its pathway is membrane lipid metabolism; glycerophospholipid metabolism. Functionally, catalyzes the reduction of the glycolytic intermediate dihydroxyacetone phosphate (DHAP) to sn-glycerol 3-phosphate (G3P), the key precursor for phospholipid synthesis. In Wolbachia sp. subsp. Drosophila simulans (strain wRi), this protein is Glycerol-3-phosphate dehydrogenase [NAD(P)+].